Consider the following 336-residue polypeptide: Probable magnesium transporter NIPA2 (336 aa).

At 1-7 the chain is on the extracellular side; it reads MEEMSPD. The chain crosses the membrane as a helical span at residues 8–28; it reads NIHGVILAVSSSIFIGSSFII. Topologically, residues 29–55 are cytoplasmic; that stretch reads KKKGLKKAGVSGARAGEGGYGYLYEPW. The chain crosses the membrane as a helical span at residues 56 to 76; that stretch reads WWAGMITMIVGEIANFAAYAF. Residues 77 to 79 lie on the Extracellular side of the membrane; sequence APA. Residues 80 to 100 form a helical membrane-spanning segment; that stretch reads ILVTPLGALSIIFSAVLAHFI. Over 101 to 104 the chain is Cytoplasmic; the sequence is LEEK. Residues 105-125 traverse the membrane as a helical segment; sequence LHMFGILGCVLCVVGSTTIVL. Over 126-145 the chain is Extracellular; the sequence is HAPHEQGIESVKQVWHLATE. The helical transmembrane segment at 146 to 166 threads the bilayer; that stretch reads PGFLAYSAVVLVVVLALIFYY. Residues 167-179 lie on the Cytoplasmic side of the membrane; the sequence is EPRYGKTHMIVYV. Residues 180-200 form a helical membrane-spanning segment; that stretch reads GICSLMGSLTVMSVKAVAIAI. The Extracellular segment spans residues 201–212; that stretch reads KLTFSGMNQFKY. The helical transmembrane segment at 213–233 threads the bilayer; that stretch reads FHAWIFIIVVTICCILQINYL. At 234 to 244 the chain is on the cytoplasmic side; that stretch reads NKALDNFNTAV. A helical transmembrane segment spans residues 245–265; that stretch reads ISPVYYVMFTTFTILASMIMF. Residues 266–272 are Extracellular-facing; that stretch reads KDWASQS. A helical transmembrane segment spans residues 273–293; the sequence is GLQIATELCGFVTILSGTFLL. Over 294–336 the chain is Cytoplasmic; it reads HKTKDMGNSTSLRGSTSHSPRDTPVFINSGSSRSSNSTRPAIL. The segment at 303-336 is disordered; the sequence is TSLRGSTSHSPRDTPVFINSGSSRSSNSTRPAIL. A compositionally biased stretch (low complexity) spans 321–330; it reads NSGSSRSSNS.

This sequence belongs to the NIPA (TC 2.A.7) family. In terms of assembly, homodimer.

Its subcellular location is the cell membrane. It is found in the early endosome. Acts as a Mg(2+) transporter. Can also transport other divalent cations such as Fe(2+), Sr(2+), Ba(2+), Mn(2+) and Co(2+) but to a much less extent than Mg(2+). The sequence is that of Probable magnesium transporter NIPA2 from Arabidopsis thaliana (Mouse-ear cress).